We begin with the raw amino-acid sequence, 137 residues long: Small ribosomal subunit protein uS11 (137 aa).

A disordered region spans residues 1–30 (MAQAKKGGAPKKGQKTRRREKKNVPHGAAH). A compositionally biased stretch (basic residues) spans 8-21 (GAPKKGQKTRRREK).

It belongs to the universal ribosomal protein uS11 family. As to quaternary structure, part of the 30S ribosomal subunit. Interacts with proteins S7 and S18. Binds to IF-3.

Functionally, located on the platform of the 30S subunit, it bridges several disparate RNA helices of the 16S rRNA. Forms part of the Shine-Dalgarno cleft in the 70S ribosome. This Mycolicibacterium vanbaalenii (strain DSM 7251 / JCM 13017 / BCRC 16820 / KCTC 9966 / NRRL B-24157 / PYR-1) (Mycobacterium vanbaalenii) protein is Small ribosomal subunit protein uS11.